A 997-amino-acid polypeptide reads, in one-letter code: Protein translocase subunit SecA (997 aa).

Residues Gln-84, 102–106, and Asp-582 each bind ATP; that span reads GEGKT. Positions 950–997 are disordered; that stretch reads PYVPVPEAKPEPSEVFGVERKRATPPPQPGLSRAERRRLMRQEKKRKK. The segment covering 957 to 971 has biased composition (basic and acidic residues); sequence AKPEPSEVFGVERKR. Over residues 984–997 the composition is skewed to basic residues; it reads ERRRLMRQEKKRKK.

Belongs to the SecA family. Monomer and homodimer. Part of the essential Sec protein translocation apparatus which comprises SecA, SecYEG and auxiliary proteins SecDF. Other proteins may also be involved.

The protein resides in the cell inner membrane. It localises to the cytoplasm. It carries out the reaction ATP + H2O + cellular proteinSide 1 = ADP + phosphate + cellular proteinSide 2.. Its function is as follows. Part of the Sec protein translocase complex. Interacts with the SecYEG preprotein conducting channel. Has a central role in coupling the hydrolysis of ATP to the transfer of proteins into and across the cell membrane, serving as an ATP-driven molecular motor driving the stepwise translocation of polypeptide chains across the membrane. This chain is Protein translocase subunit SecA, found in Thermus thermophilus (strain ATCC BAA-163 / DSM 7039 / HB27).